Reading from the N-terminus, the 228-residue chain is Probable septum site-determining protein MinC (228 aa).

This sequence belongs to the MinC family. Interacts with MinD and FtsZ.

Cell division inhibitor that blocks the formation of polar Z ring septums. Rapidly oscillates between the poles of the cell to destabilize FtsZ filaments that have formed before they mature into polar Z rings. Prevents FtsZ polymerization. The polypeptide is Probable septum site-determining protein MinC (Symbiobacterium thermophilum (strain DSM 24528 / JCM 14929 / IAM 14863 / T)).